A 352-amino-acid polypeptide reads, in one-letter code: Phosphoribosylformylglycinamidine cyclo-ligase (352 aa).

It belongs to the AIR synthase family.

The protein localises to the cytoplasm. The enzyme catalyses 2-formamido-N(1)-(5-O-phospho-beta-D-ribosyl)acetamidine + ATP = 5-amino-1-(5-phospho-beta-D-ribosyl)imidazole + ADP + phosphate + H(+). The protein operates within purine metabolism; IMP biosynthesis via de novo pathway; 5-amino-1-(5-phospho-D-ribosyl)imidazole from N(2)-formyl-N(1)-(5-phospho-D-ribosyl)glycinamide: step 2/2. The protein is Phosphoribosylformylglycinamidine cyclo-ligase of Stenotrophomonas maltophilia (strain R551-3).